Reading from the N-terminus, the 1363-residue chain is Spike glycoprotein (1363 aa).

Residues 1 to 13 form the signal peptide; sequence MFLILLISLPMAL. Residues 14-1307 are Extracellular-facing; that stretch reads AVIGDLKCTT…GTYEYYVKWP (1294 aa). Residues 15 to 298 enclose the BetaCoV S1-NTD domain; sequence VIGDLKCTTV…DFMSEIKCKT (284 aa). 5 disulfide bridges follow: Cys21–Cys165, Cys160–Cys193, Cys172–Cys252, Cys286–Cys296, and Cys331–Cys356. Asn59 and Asn133 each carry an N-linked (GlcNAc...) asparagine; by host glycan. Residue Asn198 is glycosylated (N-linked (GlcNAc...) asparagine; by host). Positions 329–617 constitute a BetaCoV S1-CTD domain; it reads PDCNIEAWLN…DVNSGTTCST (289 aa). N-linked (GlcNAc...) asparagine; by host glycosylation occurs at Asn359. Cystine bridges form between Cys374–Cys427 and Cys386–Cys615. Residues Asn437, Asn649, Asn676, Asn696, Asn714, Asn739, and Asn788 are each glycosylated (N-linked (GlcNAc...) asparagine; by host). Fusion peptide stretches follow at residues 914-935 and 933-953; these read SAIE…VEAY and EAYN…VQSY. Asn937 carries an N-linked (GlcNAc...) asparagine; by host glycan. Cys938 and Cys949 are joined by a disulfide. Residues 1014–1064 form a heptad repeat 1 region; that stretch reads QKLIANAFNNALDAIQEGFDATNSALVKIQAVVNANAEALNNLLQQLSNRF. Residues 1043–1087 adopt a coiled-coil conformation; that stretch reads QAVVNANAEALNNLLQQLSNRFGAISSSLQEILSRLDALEAQAQI. N-linked (GlcNAc...) asparagine; by host glycosylation is found at Asn1194, Asn1224, Asn1234, Asn1253, Asn1267, and Asn1288. Residues 1258–1296 form a heptad repeat 2 region; the sequence is APDLSLDYINVTFLDLQDEMNRLQEAIKVLNQSYINLKD. The stretch at 1269–1297 forms a coiled coil; that stretch reads TFLDLQDEMNRLQEAIKVLNQSYINLKDI. A helical membrane pass occupies residues 1308–1328; that stretch reads WYVWLLIGLAGVAMLVLLFFI. Residues 1329 to 1363 lie on the Cytoplasmic side of the membrane; it reads CCCTGCGTSCFKKCGGCCDDYTGHQELVIKTSHDD. The short motif at 1359–1363 is the KxHxx element; it reads TSHDD.

Belongs to the betacoronaviruses spike protein family. In terms of assembly, homotrimer; each monomer consists of a S1 and a S2 subunit. The resulting peplomers protrude from the virus surface as spikes. In terms of processing, specific enzymatic cleavages in vivo yield mature proteins. The precursor is processed into S1 and S2 by host cell furin or another cellular protease to yield the mature S1 and S2 proteins. Additionally, a second cleavage leads to the release of a fusion peptide after viral attachment to host cell receptor. The cytoplasmic Cys-rich domain is palmitoylated. Spike glycoprotein is digested within host endosomes.

The protein localises to the virion membrane. Its subcellular location is the host endoplasmic reticulum-Golgi intermediate compartment membrane. It is found in the host cell membrane. In terms of biological role, attaches the virion to the cell membrane by interacting with host receptor, initiating the infection. Functionally, mediates fusion of the virion and cellular membranes by acting as a class I viral fusion protein. Under the current model, the protein has at least three conformational states: pre-fusion native state, pre-hairpin intermediate state, and post-fusion hairpin state. During viral and target cell membrane fusion, the coiled coil regions (heptad repeats) assume a trimer-of-hairpins structure, positioning the fusion peptide in close proximity to the C-terminal region of the ectodomain. The formation of this structure appears to drive apposition and subsequent fusion of viral and target cell membranes. Its function is as follows. Acts as a viral fusion peptide which is unmasked following S2 cleavage occurring upon virus endocytosis. The chain is Spike glycoprotein from Bos taurus (Bovine).